We begin with the raw amino-acid sequence, 427 residues long: UDP-N-acetyl-D-mannosamine dehydrogenase (427 aa).

NAD(+)-binding residues include Tyr19, Ile20, Asp39, Arg44, Thr91, and Thr130. 8 residues coordinate UDP-N-acetyl-alpha-D-mannosaminouronate: Arg155, Val156, Lys207, Asn211, Arg214, His245, Arg247, and Gly258. Lys207 functions as the Proton donor/acceptor in the catalytic mechanism. Cys261 (nucleophile) is an active-site residue. Positions 318 and 319 each coordinate UDP-N-acetyl-alpha-D-mannosaminouronate. Position 326 (Arg326) interacts with NAD(+). Residue Lys404 participates in UDP-N-acetyl-alpha-D-mannosaminouronate binding.

The protein belongs to the UDP-glucose/GDP-mannose dehydrogenase family. Homotetramer; probably dimer of dimers.

The catalysed reaction is UDP-N-acetyl-alpha-D-mannosamine + 2 NAD(+) + H2O = UDP-N-acetyl-alpha-D-mannosaminouronate + 2 NADH + 3 H(+). Functionally, catalyzes the four-electron oxidation of UDP-N-acetyl-D-mannosamine (UDP-ManNAc), reducing NAD(+) and releasing UDP-N-acetylmannosaminuronic acid (UDP-ManNAcA). Cannot use NADP instead of NAD. The sequence is that of UDP-N-acetyl-D-mannosamine dehydrogenase (wecC) from Methanococcus maripaludis (strain DSM 14266 / JCM 13030 / NBRC 101832 / S2 / LL).